The following is a 296-amino-acid chain: Nucleotide-binding protein SPCG_1551 (296 aa).

Position 13–20 (13–20 (GMSGAGKT)) interacts with ATP. 63 to 66 (DMRS) lines the GTP pocket.

This sequence belongs to the RapZ-like family.

Its function is as follows. Displays ATPase and GTPase activities. This Streptococcus pneumoniae (strain CGSP14) protein is Nucleotide-binding protein SPCG_1551.